A 275-amino-acid polypeptide reads, in one-letter code: Uridine-5'-phosphate dioxygenase (275 aa).

Residues His-105, Asp-107, and His-247 each contribute to the Fe cation site.

Fe(2+) serves as cofactor.

It carries out the reaction UMP + 2-oxoglutarate + O2 = uridine-5'-aldehyde + succinate + phosphate + CO2. It functions in the pathway antibiotic biosynthesis. Enhanced by ascorbic acid and inhibited by Zn(2+). Its function is as follows. Dioxygenase involved in the biosynthesis of the capuramycin-type nucleoside antibiotic A-102395. Catalyzes the dephosphorylation and oxidation of UMP to generate uridine-5'-aldehyde. Can also use the alternative alpha-keto acids pyruvate and alpha-ketoadipate (2-oxoadipate), with very low efficiency. Cannot use alpha-ketobutyrate, alpha-ketovalerate and oxaloacetate. In Amycolatopsis sp, this protein is Uridine-5'-phosphate dioxygenase.